Consider the following 245-residue polypeptide: 5'-nucleotidase SurE (245 aa).

A divalent metal cation is bound by residues aspartate 8, aspartate 9, serine 39, and asparagine 97.

This sequence belongs to the SurE nucleotidase family. The cofactor is a divalent metal cation.

The protein resides in the cytoplasm. The enzyme catalyses a ribonucleoside 5'-phosphate + H2O = a ribonucleoside + phosphate. Functionally, nucleotidase that shows phosphatase activity on nucleoside 5'-monophosphates. The sequence is that of 5'-nucleotidase SurE from Clostridium kluyveri (strain NBRC 12016).